The primary structure comprises 552 residues: MYHLGQDLPGNDVDDIEDLISADDVKPRERYENKKTVTVRAKKRSQIRLESQEEEEKPKPTIHESVIPGTQKVFVKTWGCAHNNSDSEYMAGQLAAYGYRLSGKEEADLWLLNSCTVKNPSEDTFRNEIESGMRNGKHVVVAGCVPQGAPKSDYLNGLSVIGVQQIDRVVEVVEETLKGHSVQLLQNKKKVHGRRVAGAPLSLPKVRKNPLIEIISINSGCLNQCTYCKTKHARGDLASYPPEEVVERARQSFAEGCCEIWLTSEDTGAYGRDIGSSLPELLWQLVEVIPEHCMLRVGMTNPPYILEHLEEVANVLQHPRVYSFLHVPVQSGSDSVLGEMKREYCRQDFEHVVDFLRERVPGVTIATDIICGFPTETEDDFEETMTLCAKYRFPSLFINQFFPRPGTPAAKMDRIPANLVKKRTKRLTDLFYSYEPYADRVGEIYTVLVTEVSHDKLHYVGHNKSYEQVLLPMRDNLLGTRVHVRITSASKFSMVGEILDDERDWTRCAKNQELPNVQVQTRSRERLIQRYFGIALVLGSLAFLIQLVVRLL.

Residues 31-61 (YENKKTVTVRAKKRSQIRLESQEEEEKPKPT) are disordered. Positions 71–178 (QKVFVKTWGC…VVEVVEETLK (108 aa)) constitute an MTTase N-terminal domain. Residues C80, C115, C144, C221, C225, and C228 each contribute to the [4Fe-4S] cluster site. Residues 207-438 (RKNPLIEIIS…DLFYSYEPYA (232 aa)) enclose the Radical SAM core domain. Residues 438 to 500 (ADRVGEIYTV…KFSMVGEILD (63 aa)) enclose the TRAM domain. The helical transmembrane segment at 532–552 (FGIALVLGSLAFLIQLVVRLL) threads the bilayer.

The protein belongs to the methylthiotransferase family. CDKAL1 subfamily. Requires [4Fe-4S] cluster as cofactor.

The protein localises to the membrane. The enzyme catalyses N(6)-L-threonylcarbamoyladenosine(37) in tRNA + (sulfur carrier)-SH + AH2 + 2 S-adenosyl-L-methionine = 2-methylsulfanyl-N(6)-L-threonylcarbamoyladenosine(37) in tRNA + (sulfur carrier)-H + 5'-deoxyadenosine + L-methionine + A + S-adenosyl-L-homocysteine + 2 H(+). Functionally, catalyzes the methylthiolation of N6-threonylcarbamoyladenosine (t(6)A), leading to the formation of 2-methylthio-N6-threonylcarbamoyladenosine (ms(2)t(6)A) at position 37 in tRNAs that read codons beginning with adenine. The sequence is that of Threonylcarbamoyladenosine tRNA methylthiotransferase from Drosophila melanogaster (Fruit fly).